Here is a 309-residue protein sequence, read N- to C-terminus: UDP-N-acetylenolpyruvoylglucosamine reductase (309 aa).

The FAD-binding PCMH-type domain occupies 33-195; the sequence is VGGQAETLFR…VRARLRTRPG (163 aa). Arginine 175 is an active-site residue. Residue serine 224 is the Proton donor of the active site. Glutamate 294 is an active-site residue.

The protein belongs to the MurB family. It depends on FAD as a cofactor.

The protein localises to the cytoplasm. It carries out the reaction UDP-N-acetyl-alpha-D-muramate + NADP(+) = UDP-N-acetyl-3-O-(1-carboxyvinyl)-alpha-D-glucosamine + NADPH + H(+). Its pathway is cell wall biogenesis; peptidoglycan biosynthesis. Functionally, cell wall formation. The chain is UDP-N-acetylenolpyruvoylglucosamine reductase from Granulibacter bethesdensis (strain ATCC BAA-1260 / CGDNIH1).